Here is a 292-residue protein sequence, read N- to C-terminus: MAWLQLRINTSSEYAESVGDMLSANGSQAVTYVDAKDTPMYEPKPGEIMLWPDTQVVGLFEADADMKSILQRLGKAKVLGPDFKYKLEPLEDKDWEREWMDNFHPMQFGERLWICPSWRDVPDPDAVNVMLDPGLAFGTGTHPTTALCLRWLDGIDMAGKTVVDFGCGSGILALAALKLGAERVVGVDIDPQALQATKENARRNGVEDRLDVYLPQDQPELEADVVMANILSGPLLELQSVITNYCKSKGLLVLSGILAEQVSKIEDAYSQDIVLEPSAIDGEWARVSGSKR.

S-adenosyl-L-methionine-binding residues include Thr145, Gly166, Asp188, and Asn229.

This sequence belongs to the methyltransferase superfamily. PrmA family.

It localises to the cytoplasm. The enzyme catalyses L-lysyl-[protein] + 3 S-adenosyl-L-methionine = N(6),N(6),N(6)-trimethyl-L-lysyl-[protein] + 3 S-adenosyl-L-homocysteine + 3 H(+). In terms of biological role, methylates ribosomal protein L11. In Alteromonas mediterranea (strain DSM 17117 / CIP 110805 / LMG 28347 / Deep ecotype), this protein is Ribosomal protein L11 methyltransferase.